Reading from the N-terminus, the 305-residue chain is Probable pyridoxal 5'-phosphate synthase subunit pdx1 (305 aa).

Residue aspartate 33 participates in D-ribose 5-phosphate binding. Lysine 90 acts as the Schiff-base intermediate with D-ribose 5-phosphate in catalysis. Glycine 162 contributes to the D-ribose 5-phosphate binding site. Arginine 174 provides a ligand contact to D-glyceraldehyde 3-phosphate. D-ribose 5-phosphate contacts are provided by residues glycine 223 and 244–245; that span reads GS.

This sequence belongs to the PdxS/SNZ family. As to quaternary structure, homohexamer.

It carries out the reaction aldehydo-D-ribose 5-phosphate + D-glyceraldehyde 3-phosphate + L-glutamine = pyridoxal 5'-phosphate + L-glutamate + phosphate + 3 H2O + H(+). Its pathway is cofactor biosynthesis; pyridoxal 5'-phosphate biosynthesis. Its function is as follows. Catalyzes the formation of pyridoxal 5'-phosphate from ribose 5-phosphate (RBP), glyceraldehyde 3-phosphate (G3P) and ammonia. The ammonia is provided by pdx2. Can also use ribulose 5-phosphate and dihydroxyacetone phosphate as substrates, resulting from enzyme-catalyzed isomerization of RBP and G3P, respectively. In Dictyostelium discoideum (Social amoeba), this protein is Probable pyridoxal 5'-phosphate synthase subunit pdx1 (pdx1).